We begin with the raw amino-acid sequence, 156 residues long: Hexachlorocyclohexane dehydrochlorinase 2 (156 aa).

Residue D25 is part of the active site. H73 acts as the Proton acceptor in catalysis.

It belongs to the HCH dehydrochlorinase family. As to quaternary structure, homotrimer.

It localises to the periplasm. It catalyses the reaction gamma-hexachlorocyclohexane = (3R,4S,5S,6R)-pentachlorocyclohexene + chloride + H(+). The enzyme catalyses (3R,4S,5S,6R)-pentachlorocyclohexene = (3R,6R)-1,3,4,6-tetrachlorocyclohexa-1,4-diene + chloride + H(+). Its pathway is xenobiotic degradation; hexachlorocyclohexane degradation. In terms of biological role, catalyzes the conversion of the important environmental pollutant gamma-hexachlorocyclohexane (gamma-HCH or lindane) to 1,3,4,6-tetrachloro-1,4-cyclohexadiene (1,4-TCDN) via gamma-pentachlorocyclohexene (gamma-PCCH). Proceeds by two successive 1,2-anti conformationally dependent dehydrochlorinations. Also shows activity with alpha- and delta-HCH, giving alpha- and delta-PCCH respectively, but not with the beta isomer. This Sphingobium indicum (strain DSM 16412 / CCM 7286 / MTCC 6364 / B90A) protein is Hexachlorocyclohexane dehydrochlorinase 2.